The primary structure comprises 1241 residues: Plasma membrane calcium-transporting ATPase 4 (1241 aa).

The Cytoplasmic portion of the chain corresponds to 1–92 (MTNPSDRVLP…NVIPPKKPKT (92 aa)). Serine 13 is subject to Phosphoserine. The helical transmembrane segment at 93–113 (FLELVWEALQDVTLIILEIAA) threads the bilayer. Residues 114–150 (IISLVLSFYRPAGEENELCGQVATTPEDENEAQAGWI) are Extracellular-facing. The helical transmembrane segment at 151–171 (EGAAILFSVIIVVLVTAFNDW) threads the bilayer. Residues 172-356 (SKEKQFRGLQ…KEKSVLQGKL (185 aa)) lie on the Cytoplasmic side of the membrane. The interval 294 to 318 (EGEKKKKGKKQGVPENRNKAKTQDG) is disordered. Serine 328 carries the post-translational modification Phosphoserine. Residues 357–376 (TRLAVQIGKAGLLMSALTVF) form a helical membrane-spanning segment. Over 377–409 (ILILYFVIDNFVINRRPWLPECTPIYIQYFVKF) the chain is Extracellular. Residues 410–427 (FIIGITVLVVAVPEGLPL) form a helical membrane-spanning segment. The Cytoplasmic portion of the chain corresponds to 428 to 840 (AVTISLAYSV…MWGRNVYDSI (413 aa)). Aspartate 465 functions as the 4-aspartylphosphate intermediate in the catalytic mechanism. Positions 785 and 789 each coordinate Mg(2+). A helical transmembrane segment spans residues 841–860 (SKFLQFQLTVNVVAVIVAFT). Residues 861 to 870 (GACITQDSPL) lie on the Extracellular side of the membrane. The helical transmembrane segment at 871-891 (KAVQMLWVNLIMDTFASLALA) threads the bilayer. Over 892-911 (TEPPTESLLKRRPYGRNKPL) the chain is Cytoplasmic. Residues 912-934 (ISRTMMKNILGHAFYQLIVIFIL) traverse the membrane as a helical segment. The Extracellular portion of the chain corresponds to 935–952 (VFAGEKFFDIDSGRKAPL). The chain crosses the membrane as a helical span at residues 953–974 (HSPPSQHYTIVFNTFVLMQLFN). Residues 975–993 (EINSRKIHGEKNVFSGIYR) lie on the Cytoplasmic side of the membrane. A helical membrane pass occupies residues 994-1015 (NIIFCSVVLGTFICQIFIVEFG). Residues 1016-1025 (GKPFSCTSLS) lie on the Extracellular side of the membrane. The helical transmembrane segment at 1026–1047 (LSQWLWCLFIGIGELLWGQFIS) threads the bilayer. The Cytoplasmic portion of the chain corresponds to 1048-1241 (AIPTRSLKFL…SSLQSLETSV (194 aa)). Residues 1086–1103 (LRRGQILWFRGLNRIQTQ) form a calmodulin-binding subdomain A region. Position 1102 is a phosphothreonine; by PKC (threonine 1102). The segment at 1104–1113 (IDVINTFQTG) is calmodulin-binding subdomain B.

Belongs to the cation transport ATPase (P-type) (TC 3.A.3) family. Type IIB subfamily. In terms of assembly, interacts with PDZD11. Interacts with SLC35G1 and STIM1. Interacts with calmodulin. In terms of tissue distribution, isoform XB is the most abundant isoform and is expressed ubiquitously. Isoforms containing segment Z have only been detected in heart, while isoforms containing segment a have been found in heart, stomach and brain cortex.

The protein resides in the cell membrane. It localises to the cell projection. Its subcellular location is the cilium. It is found in the flagellum membrane. The enzyme catalyses Ca(2+)(in) + ATP + H2O = Ca(2+)(out) + ADP + phosphate + H(+). With respect to regulation, activated by calcium/calmodulin. Functionally, calcium/calmodulin-regulated and magnesium-dependent enzyme that catalyzes the hydrolysis of ATP coupled with the transport of calcium out of the cell. By regulating sperm cell calcium homeostasis, may play a role in sperm motility. The protein is Plasma membrane calcium-transporting ATPase 4 of Homo sapiens (Human).